Here is a 309-residue protein sequence, read N- to C-terminus: tRNA dimethylallyltransferase (309 aa).

9-16 (GPTAVGKT) contributes to the ATP binding site. 11-16 (TAVGKT) provides a ligand contact to substrate. Positions 34–37 (DSMQ) are interaction with substrate tRNA.

The protein belongs to the IPP transferase family. In terms of assembly, monomer. It depends on Mg(2+) as a cofactor.

It carries out the reaction adenosine(37) in tRNA + dimethylallyl diphosphate = N(6)-dimethylallyladenosine(37) in tRNA + diphosphate. Catalyzes the transfer of a dimethylallyl group onto the adenine at position 37 in tRNAs that read codons beginning with uridine, leading to the formation of N6-(dimethylallyl)adenosine (i(6)A). In Enterococcus faecalis (strain ATCC 700802 / V583), this protein is tRNA dimethylallyltransferase.